The sequence spans 578 residues: Laccase-10 (578 aa).

Residues 1–29 form the signal peptide; sequence MGARCLALLLLYGTLLLLLLLPQLPLAGA. 2 consecutive Plastocyanin-like domains span residues 37–153 and 163–319; these read NVKL…PKAG and KDVP…YAPP. 2 N-linked (GlcNAc...) asparagine glycosylation sites follow: Asn-42 and Asn-83. Residues His-87 and His-89 each coordinate Cu cation. Asn-119 is a glycosylation site (N-linked (GlcNAc...) asparagine). Residues His-132 and His-134 each contribute to the Cu cation site. N-linked (GlcNAc...) asparagine glycosylation is found at Asn-192, Asn-208, Asn-244, Asn-307, Asn-336, Asn-384, Asn-392, Asn-402, Asn-438, Asn-445, Asn-448, Asn-451, and Asn-461. The 135-residue stretch at 428-562 folds into the Plastocyanin-like 3 domain; sequence DFPASPLEPF…KMAWVVNDGP (135 aa). 7 residues coordinate Cu cation: His-479, His-482, His-484, His-541, Cys-542, His-543, and His-547.

Belongs to the multicopper oxidase family. The cofactor is Cu cation.

The protein resides in the secreted. It is found in the extracellular space. It localises to the apoplast. The catalysed reaction is 4 hydroquinone + O2 = 4 benzosemiquinone + 2 H2O. In terms of biological role, lignin degradation and detoxification of lignin-derived products. This chain is Laccase-10 (LAC10), found in Oryza sativa subsp. japonica (Rice).